A 488-amino-acid chain; its full sequence is Glutamyl-tRNA(Gln) amidotransferase subunit A (488 aa).

Catalysis depends on charge relay system residues Lys77 and Ser152. Ser176 acts as the Acyl-ester intermediate in catalysis.

It belongs to the amidase family. GatA subfamily. As to quaternary structure, heterotrimer of A, B and C subunits.

The catalysed reaction is L-glutamyl-tRNA(Gln) + L-glutamine + ATP + H2O = L-glutaminyl-tRNA(Gln) + L-glutamate + ADP + phosphate + H(+). Its function is as follows. Allows the formation of correctly charged Gln-tRNA(Gln) through the transamidation of misacylated Glu-tRNA(Gln) in organisms which lack glutaminyl-tRNA synthetase. The reaction takes place in the presence of glutamine and ATP through an activated gamma-phospho-Glu-tRNA(Gln). The chain is Glutamyl-tRNA(Gln) amidotransferase subunit A from Streptococcus pyogenes serotype M2 (strain MGAS10270).